A 535-amino-acid chain; its full sequence is CTP synthase (535 aa).

The amidoligase domain stretch occupies residues 1–267; it reads MTKYIFVTGG…DKLVCEHMKL (267 aa). Ser-13 is a binding site for CTP. Ser-13 is a binding site for UTP. 14–19 contacts ATP; the sequence is SLGKGI. Tyr-54 serves as a coordination point for L-glutamine. Residue Asp-71 participates in ATP binding. Mg(2+) contacts are provided by Asp-71 and Glu-141. CTP-binding positions include 148–150, 188–193, and Lys-224; these read DIE and KTKPTQ. Residues 188-193 and Lys-224 contribute to the UTP site; that span reads KTKPTQ. In terms of domain architecture, Glutamine amidotransferase type-1 spans 292–534; that stretch reads TIGLVGKYVE…IGASVEAANQ (243 aa). Gly-354 provides a ligand contact to L-glutamine. Cys-381 (nucleophile; for glutamine hydrolysis) is an active-site residue. Residues 382 to 385, Glu-405, and Arg-462 contribute to the L-glutamine site; that span reads LGMQ. Residues His-507 and Glu-509 contribute to the active site.

It belongs to the CTP synthase family. As to quaternary structure, homotetramer. Interacts with BrxC.

It catalyses the reaction UTP + L-glutamine + ATP + H2O = CTP + L-glutamate + ADP + phosphate + 2 H(+). The catalysed reaction is L-glutamine + H2O = L-glutamate + NH4(+). The enzyme catalyses UTP + NH4(+) + ATP = CTP + ADP + phosphate + 2 H(+). It participates in pyrimidine metabolism; CTP biosynthesis via de novo pathway; CTP from UDP: step 2/2. Allosterically activated by GTP, when glutamine is the substrate; GTP has no effect on the reaction when ammonia is the substrate. The allosteric effector GTP functions by stabilizing the protein conformation that binds the tetrahedral intermediate(s) formed during glutamine hydrolysis. Inhibited by the product CTP, via allosteric rather than competitive inhibition. Catalyzes the ATP-dependent amination of UTP to CTP with either L-glutamine or ammonia as the source of nitrogen. Regulates intracellular CTP levels through interactions with the four ribonucleotide triphosphates. The sequence is that of CTP synthase from Bacillus subtilis (strain 168).